Consider the following 215-residue polypeptide: Pyrrolidone-carboxylate peptidase (215 aa).

Catalysis depends on residues E78, C141, and H165.

Belongs to the peptidase C15 family. In terms of assembly, homotetramer.

It localises to the cytoplasm. It catalyses the reaction Release of an N-terminal pyroglutamyl group from a polypeptide, the second amino acid generally not being Pro.. Functionally, removes 5-oxoproline from various penultimate amino acid residues except L-proline. The chain is Pyrrolidone-carboxylate peptidase from Streptococcus pyogenes serotype M18 (strain MGAS8232).